Here is a 676-residue protein sequence, read N- to C-terminus: Cysteine-rich receptor-like protein kinase 4 (676 aa).

The first 16 residues, 1–16 (MSFFWLFPFLLHLSFA), serve as a signal peptide directing secretion. The Extracellular portion of the chain corresponds to 17–287 (DSLSPLSAPV…ISERGKGRNS (271 aa)). Gnk2-homologous domains follow at residues 31–135 (HLNH…HRNI) and 146–246 (ILLN…NYSF). N-linked (GlcNAc...) asparagine glycosylation is found at Asn33, Asn46, Asn64, Asn152, Asn181, Asn243, and Asn248. Residues 252-279 (TRSSSPPSLPPRSTPQQQLKLAPPPLIS) form a disordered region. Asn286 carries an N-linked (GlcNAc...) asparagine glycan. The helical transmembrane segment at 288-308 (SVIIVVVVPIIALLLLFVAFF) threads the bilayer. Topologically, residues 309 to 676 (SLRAKKTRTN…DASITNVTPR (368 aa)) are cytoplasmic. One can recognise a Protein kinase domain in the interval 351-631 (FCETNKLGQG…QMLTTSSIAL (281 aa)). ATP contacts are provided by residues 357–365 (LGQGGFGEV) and Lys379. The residue at position 424 (Tyr424) is a Phosphotyrosine. The active-site Proton acceptor is the Asp476. The residue at position 516 (Thr516) is a Phosphothreonine. A Phosphotyrosine modification is found at Tyr524.

The protein belongs to the protein kinase superfamily. Ser/Thr protein kinase family. CRK subfamily.

Its subcellular location is the membrane. The enzyme catalyses L-seryl-[protein] + ATP = O-phospho-L-seryl-[protein] + ADP + H(+). It carries out the reaction L-threonyl-[protein] + ATP = O-phospho-L-threonyl-[protein] + ADP + H(+). This Arabidopsis thaliana (Mouse-ear cress) protein is Cysteine-rich receptor-like protein kinase 4 (CRK4).